The chain runs to 225 residues: UPF0758 protein BB3258 (225 aa).

One can recognise an MPN domain in the interval alanine 103–leucine 225. Zn(2+) contacts are provided by histidine 174, histidine 176, and aspartate 187. The short motif at histidine 174–aspartate 187 is the JAMM motif element.

Belongs to the UPF0758 family.

The polypeptide is UPF0758 protein BB3258 (Bordetella bronchiseptica (strain ATCC BAA-588 / NCTC 13252 / RB50) (Alcaligenes bronchisepticus)).